Here is a 182-residue protein sequence, read N- to C-terminus: Large ribosomal subunit protein uL6 (182 aa).

It belongs to the universal ribosomal protein uL6 family. In terms of assembly, part of the 50S ribosomal subunit.

This protein binds to the 23S rRNA, and is important in its secondary structure. It is located near the subunit interface in the base of the L7/L12 stalk, and near the tRNA binding site of the peptidyltransferase center. This is Large ribosomal subunit protein uL6 from Nostoc sp. (strain PCC 7120 / SAG 25.82 / UTEX 2576).